A 454-amino-acid chain; its full sequence is Chromosomal replication initiator protein DnaA (454 aa).

Residues 1–83 form a domain I, interacts with DnaA modulators region; sequence MMTDSMRLVW…RPLKVLLEVA (83 aa). The tract at residues 83 to 115 is domain II; sequence AECVAEAPETPEEAPQQLCLPAFADIPRPSSGR. A domain III, AAA+ region region spans residues 116 to 333; that stretch reads LLNRDFTFDS…SGIKGLAARN (218 aa). Residues glycine 160, glycine 162, lysine 163, and serine 164 each contribute to the ATP site. A domain IV, binds dsDNA region spans residues 334–454; the sequence is SIMGRGIDLK…LCGKIEAGEF (121 aa).

It belongs to the DnaA family. Oligomerizes as a right-handed, spiral filament on DNA at oriC.

It is found in the cytoplasm. Plays an essential role in the initiation and regulation of chromosomal replication. ATP-DnaA binds to the origin of replication (oriC) to initiate formation of the DNA replication initiation complex once per cell cycle. Binds the DnaA box (a 9 base pair repeat at the origin) and separates the double-stranded (ds)DNA. Forms a right-handed helical filament on oriC DNA; dsDNA binds to the exterior of the filament while single-stranded (ss)DNA is stabiized in the filament's interior. The ATP-DnaA-oriC complex binds and stabilizes one strand of the AT-rich DNA unwinding element (DUE), permitting loading of DNA polymerase. After initiation quickly degrades to an ADP-DnaA complex that is not apt for DNA replication. Binds acidic phospholipids. This chain is Chromosomal replication initiator protein DnaA, found in Desulfatibacillum aliphaticivorans.